Here is a 430-residue protein sequence, read N- to C-terminus: Phosphoribosylamine--glycine ligase (430 aa).

In terms of domain architecture, ATP-grasp spans 109–314 (RGLMNKYGID…FLTIAEHIIN (206 aa)). Position 136 to 192 (136 to 192 (IREYPGDLAVKPTGLTGGKGVKVMGEQVDREGAVEYAMTLKDQVIILEERLLGEEFT)) interacts with ATP. Residues Gln-272, Glu-284, and Asn-286 each coordinate Mg(2+). 3 residues coordinate Mn(2+): Gln-272, Glu-284, and Asn-286.

This sequence belongs to the GARS family. Mg(2+) serves as cofactor. It depends on Mn(2+) as a cofactor.

The enzyme catalyses 5-phospho-beta-D-ribosylamine + glycine + ATP = N(1)-(5-phospho-beta-D-ribosyl)glycinamide + ADP + phosphate + H(+). It participates in purine metabolism; IMP biosynthesis via de novo pathway; N(1)-(5-phospho-D-ribosyl)glycinamide from 5-phospho-alpha-D-ribose 1-diphosphate: step 2/2. This Methanocorpusculum labreanum (strain ATCC 43576 / DSM 4855 / Z) protein is Phosphoribosylamine--glycine ligase.